The following is a 377-amino-acid chain: Queuine tRNA-ribosyltransferase (377 aa).

The active-site Proton acceptor is the Asp-94. Residues Asp-94 to Phe-98, Asp-148, Gln-191, and Gly-218 each bind substrate. An RNA binding region spans residues Gly-249 to Asp-255. Residue Asp-268 is the Nucleophile of the active site. The segment at Thr-273 to Arg-277 is RNA binding; important for wobble base 34 recognition.

This sequence belongs to the queuine tRNA-ribosyltransferase family. As to quaternary structure, homodimer. Within each dimer, one monomer is responsible for RNA recognition and catalysis, while the other monomer binds to the replacement base PreQ1.

The catalysed reaction is 7-aminomethyl-7-carbaguanine + guanosine(34) in tRNA = 7-aminomethyl-7-carbaguanosine(34) in tRNA + guanine. Its pathway is tRNA modification; tRNA-queuosine biosynthesis. Catalyzes the base-exchange of a guanine (G) residue with the queuine precursor 7-aminomethyl-7-deazaguanine (PreQ1) at position 34 (anticodon wobble position) in tRNAs with GU(N) anticodons (tRNA-Asp, -Asn, -His and -Tyr). Catalysis occurs through a double-displacement mechanism. The nucleophile active site attacks the C1' of nucleotide 34 to detach the guanine base from the RNA, forming a covalent enzyme-RNA intermediate. The proton acceptor active site deprotonates the incoming PreQ1, allowing a nucleophilic attack on the C1' of the ribose to form the product. After dissociation, two additional enzymatic reactions on the tRNA convert PreQ1 to queuine (Q), resulting in the hypermodified nucleoside queuosine (7-(((4,5-cis-dihydroxy-2-cyclopenten-1-yl)amino)methyl)-7-deazaguanosine). The protein is Queuine tRNA-ribosyltransferase of Brucella suis biovar 1 (strain 1330).